We begin with the raw amino-acid sequence, 368 residues long: (3S,6E)-nerolidol synthase (368 aa).

Mg(2+) contacts are provided by D91, N228, and S232. Residues 91 to 95 carry the DDXXE motif motif; sequence DDLLE.

Belongs to the terpene synthase family. The cofactor is Mg(2+). Mn(2+) serves as cofactor.

The catalysed reaction is (2E,6E)-farnesyl diphosphate + H2O = (3S,6E)-nerolidol + diphosphate. The enzyme catalyses (2E)-geranyl diphosphate + H2O = (S)-linalool + diphosphate. Its pathway is secondary metabolite biosynthesis; terpenoid biosynthesis. Sesquiterpene synthase converting farnesyl diphosphate to nerolidol. Also has a monoterpene synthase activity, converting geranyl diphosphate into linalool as the major product. Has no diterpene synthase activity. The protein is (3S,6E)-nerolidol synthase of Selaginella moellendorffii (Spikemoss).